An 81-amino-acid polypeptide reads, in one-letter code: Antitoxin VapB28 (81 aa).

Antitoxin component of a type II toxin-antitoxin (TA) system. In Mycobacterium tuberculosis (strain CDC 1551 / Oshkosh), this protein is Antitoxin VapB28 (vapB28).